Reading from the N-terminus, the 91-residue chain is UPF0250 protein mma_3250 (91 aa).

Belongs to the UPF0250 family.

This is UPF0250 protein mma_3250 from Janthinobacterium sp. (strain Marseille) (Minibacterium massiliensis).